The following is a 160-amino-acid chain: Putative oxygenase ATEG_00330 (160 aa).

One can recognise an EthD domain in the interval H24–A100.

Belongs to the tpcK family.

Its function is as follows. Putative oxygenase; part of the gene cluster that mediates the biosynthesis of isoflavipucine. The PKS part of the PKS-NRPS ATEG_00325 probably assembles a triketide from an acetyl starter and two malonyl-CoA extender units. The poly-beta-keto intermediate would then be fused to the leucine unit by the NRPS part. The resulting amide would be liberated from the PKS-NRPS through reductive release of the linear PKS-NRPS product from the enzyme complex. Further steps in isoflapucine synthesis include a cyclization step, an oxidation step, a hydrolysis step involving a trans-amidation, and an additional oxidation step, leading to flavipucine. Formation of isoflavipucine from flavipucine requires an unusual rearrangement. Alternative rearrangement reactions could build up rubrobramide, representing a branching of flavipucine biosynthesis. The enzymes involved in the post-PKS-NRPS steps have not been identified yet, but the putative oxygenases ATEG_003329 and ATEG_00330 encoded by the cluster could play a role. The polypeptide is Putative oxygenase ATEG_00330 (Aspergillus terreus (strain NIH 2624 / FGSC A1156)).